The following is a 137-amino-acid chain: uncharacterized protein (137 aa).

4 consecutive transmembrane segments (helical) span residues 20–39 (YGKI…GYAV), 44–61 (WFIT…LSLV), 86–105 (VEIF…ALDL), and 109–131 (AALA…YGYY).

The protein localises to the cell membrane. This is an uncharacterized protein from Archaeoglobus fulgidus (strain ATCC 49558 / DSM 4304 / JCM 9628 / NBRC 100126 / VC-16).